Reading from the N-terminus, the 317-residue chain is 17-beta-hydroxysteroid dehydrogenase type 6 (317 aa).

The first 17 residues, 1 to 17 (MWFYLVTLVGLYHLLRW), serve as a signal peptide directing secretion. 33–57 (FITGCDSGFGNLLARQLDRRGMRVL) is an NAD(+) binding site. Residues N71 and N161 are each glycosylated (N-linked (GlcNAc...) asparagine). A substrate-binding site is contributed by S164. The active-site Proton acceptor is the Y176.

This sequence belongs to the short-chain dehydrogenases/reductases (SDR) family. As to expression, detected in liver.

It is found in the microsome membrane. The protein localises to the early endosome membrane. It catalyses the reaction all-trans-retinol--[retinol-binding protein] + NAD(+) = all-trans-retinal--[retinol-binding protein] + NADH + H(+). The enzyme catalyses all-trans-retinol + NAD(+) = all-trans-retinal + NADH + H(+). It carries out the reaction androsterone + NAD(+) = 5alpha-androstan-3,17-dione + NADH + H(+). The catalysed reaction is testosterone + NAD(+) = androst-4-ene-3,17-dione + NADH + H(+). It catalyses the reaction 5alpha-androstane-3alpha,17beta-diol + NAD(+) = 17beta-hydroxy-5alpha-androstan-3-one + NADH + H(+). The enzyme catalyses 17beta-estradiol + NAD(+) = estrone + NADH + H(+). It carries out the reaction 17beta-estradiol + NADP(+) = estrone + NADPH + H(+). The catalysed reaction is 3alpha-hydroxy-5alpha-pregnan-20-one + NAD(+) = 5alpha-pregnane-3,20-dione + NADH + H(+). It catalyses the reaction 5alpha-androstane-3beta,17beta-diol + NAD(+) = 17beta-hydroxy-5alpha-androstan-3-one + NADH + H(+). The enzyme catalyses 3beta-hydroxy-5alpha-androstan-17-one + NAD(+) = 5alpha-androstan-3,17-dione + NADH + H(+). Its activity is regulated as follows. Inhibited by carbenoxolone and phenyl arsenoxide. NAD-dependent oxidoreductase with broad substrate specificity that shows both oxidative and reductive activity (in vitro). Has 17-beta-hydroxysteroid dehydrogenase activity towards various steroids (in vitro). Converts 5-alpha-androstan-3-alpha,17-beta-diol to androsterone and estradiol to estrone (in vitro). Has 3-alpha-hydroxysteroid dehydrogenase activity towards androsterone (in vitro). Has retinol dehydrogenase activity towards all-trans-retinol (in vitro). The protein is 17-beta-hydroxysteroid dehydrogenase type 6 (Hsd17b6) of Mus musculus (Mouse).